The following is a 266-amino-acid chain: Non-structural maintenance of chromosomes element 1 homolog (266 aa).

Positions 1–102 (MQGSTRRAGA…SVSKMATDFA (102 aa)) are interaction with NSMCE3. The RING-type; atypical zinc finger occupies 191–232 (CNICHSLLIQGQSCETCGIRMHLPCVAKYFQSTAEPRCPHCN). The segment at 246–266 (EKEREAGISKSSRKSLRTRQH) is disordered. Positions 256–266 (SSRKSLRTRQH) are enriched in basic residues.

The protein belongs to the NSE1 family. Component of the SMC5-SMC6 complex which consists at least of SMC5, SMC6, NSMCE2, NSMCE1, NSMCE4A or EID3 and NSMCE3. NSMCE1, NSMCE4A or EID3 and NSMCE3 probably form a subcomplex that bridges the head domains of the SMC5-SMC6 heterodimer. Interacts with NSMCE3. Ubiquitinated.

Its subcellular location is the nucleus. It localises to the chromosome. It is found in the telomere. The catalysed reaction is S-ubiquitinyl-[E2 ubiquitin-conjugating enzyme]-L-cysteine + [acceptor protein]-L-lysine = [E2 ubiquitin-conjugating enzyme]-L-cysteine + N(6)-ubiquitinyl-[acceptor protein]-L-lysine.. RING-type zinc finger-containing E3 ubiquitin ligase that assembles with melanoma antigen protein (MAGE) to catalyze the direct transfer of ubiquitin from E2 ubiquitin-conjugating enzyme to a specific substrate. Within MAGE-RING ubiquitin ligase complex, MAGE stimulates and specifies ubiquitin ligase activity likely through recruitment and/or stabilization of the E2 ubiquitin-conjugating enzyme at the E3:substrate complex. Involved in maintenance of genome integrity, DNA damage response and DNA repair. NSMCE3/MAGEG1 and NSMCE1 ubiquitin ligase are components of SMC5-SMC6 complex and may positively regulate homologous recombination-mediated DNA repair. The protein is Non-structural maintenance of chromosomes element 1 homolog (Nsmce1) of Rattus norvegicus (Rat).